Consider the following 845-residue polypeptide: DNA replication licensing factor MCM7 (845 aa).

The region spanning 410–617 is the MCM domain; that stretch reads VYNRLAKSIA…DDEKLAEHVT (208 aa). 8 residues coordinate ATP: Tyr-423, Gly-463, Ala-465, Lys-466, Ser-467, Asn-568, Arg-593, and Arg-687. The Arginine finger motif lies at 592-595; that stretch reads SRFD. Phosphothreonine is present on Thr-811. The segment at 812–845 is disordered; sequence DQEDSLVSTPKLAPQTTASANVSAQDSDIDLQDA. Ser-819 is subject to Phosphoserine. Over residues 825-837 the composition is skewed to polar residues; it reads PQTTASANVSAQD. Ser-838 carries the post-translational modification Phosphoserine.

This sequence belongs to the MCM family. As to quaternary structure, component of the MCM2-7 complex. The complex forms a toroidal hexameric ring with the proposed subunit order MCM2-MCM6-MCM4-MCM7-MCM3-MCM5; loaded onto DNA, forms a head-head double hexamer. Interacts with CSM1 and MCM10.

Its subcellular location is the cytoplasm. The protein localises to the nucleus. It carries out the reaction ATP + H2O = ADP + phosphate + H(+). Its function is as follows. Acts as a component of the MCM2-7 complex (MCM complex) which is the putative replicative helicase essential for 'once per cell cycle' DNA replication initiation and elongation in eukaryotic cells. Core component of CDC45-MCM-GINS (CMG) helicase, the molecular machine that unwinds template DNA during replication, and around which the replisome is built. The active ATPase sites in the MCM2-7 ring are formed through the interaction surfaces of two neighboring subunits such that a critical structure of a conserved arginine finger motif is provided in trans relative to the ATP-binding site of the Walker A box of the adjacent subunit. The six ATPase active sites, however, are likely to contribute differentially to the complex helicase activity. Once loaded onto DNA, double hexamers can slide on dsDNA in the absence of ATPase activity. In Saccharomyces cerevisiae (strain ATCC 204508 / S288c) (Baker's yeast), this protein is DNA replication licensing factor MCM7 (MCM7).